Consider the following 279-residue polypeptide: Tryptophan synthase alpha chain (279 aa).

Residues glutamate 50 and aspartate 61 each act as proton acceptor in the active site.

Belongs to the TrpA family. In terms of assembly, tetramer of two alpha and two beta chains.

The catalysed reaction is (1S,2R)-1-C-(indol-3-yl)glycerol 3-phosphate + L-serine = D-glyceraldehyde 3-phosphate + L-tryptophan + H2O. Its pathway is amino-acid biosynthesis; L-tryptophan biosynthesis; L-tryptophan from chorismate: step 5/5. In terms of biological role, the alpha subunit is responsible for the aldol cleavage of indoleglycerol phosphate to indole and glyceraldehyde 3-phosphate. This Brucella abortus (strain S19) protein is Tryptophan synthase alpha chain.